Reading from the N-terminus, the 179-residue chain is Large ribosomal subunit protein uL6 (179 aa).

This sequence belongs to the universal ribosomal protein uL6 family. As to quaternary structure, part of the 50S ribosomal subunit.

In terms of biological role, this protein binds to the 23S rRNA, and is important in its secondary structure. It is located near the subunit interface in the base of the L7/L12 stalk, and near the tRNA binding site of the peptidyltransferase center. This is Large ribosomal subunit protein uL6 from Geotalea uraniireducens (strain Rf4) (Geobacter uraniireducens).